A 344-amino-acid chain; its full sequence is Dihydroorotate dehydrogenase (quinone) (344 aa).

Residues 61 to 65 (AGLDK) and threonine 85 contribute to the FMN site. Substrate is bound at residue lysine 65. 110–114 (NRMGF) is a substrate binding site. Asparagine 138 and asparagine 171 together coordinate FMN. Asparagine 171 provides a ligand contact to substrate. The Nucleophile role is filled by serine 174. Asparagine 176 is a substrate binding site. FMN is bound by residues lysine 216 and threonine 244. Position 245-246 (245-246 (NT)) interacts with substrate. FMN-binding positions include glycine 267, glycine 296, and 317–318 (YS).

It belongs to the dihydroorotate dehydrogenase family. Type 2 subfamily. In terms of assembly, monomer. The cofactor is FMN.

It is found in the cell membrane. It carries out the reaction (S)-dihydroorotate + a quinone = orotate + a quinol. Its pathway is pyrimidine metabolism; UMP biosynthesis via de novo pathway; orotate from (S)-dihydroorotate (quinone route): step 1/1. In terms of biological role, catalyzes the conversion of dihydroorotate to orotate with quinone as electron acceptor. This Psychrobacter sp. (strain PRwf-1) protein is Dihydroorotate dehydrogenase (quinone).